We begin with the raw amino-acid sequence, 669 residues long: DNA ligase (669 aa).

NAD(+) is bound by residues 35–39, 84–85, and E114; these read DSEYD and SL. K116 serves as the catalytic N6-AMP-lysine intermediate. Residues R137, E171, K287, and K311 each coordinate NAD(+). C405, C408, C423, and C428 together coordinate Zn(2+). Positions 591-669 constitute a BRCT domain; the sequence is DSDSYFAGKT…EAQLLGELKK (79 aa).

This sequence belongs to the NAD-dependent DNA ligase family. LigA subfamily. Requires Mg(2+) as cofactor. It depends on Mn(2+) as a cofactor.

The enzyme catalyses NAD(+) + (deoxyribonucleotide)n-3'-hydroxyl + 5'-phospho-(deoxyribonucleotide)m = (deoxyribonucleotide)n+m + AMP + beta-nicotinamide D-nucleotide.. DNA ligase that catalyzes the formation of phosphodiester linkages between 5'-phosphoryl and 3'-hydroxyl groups in double-stranded DNA using NAD as a coenzyme and as the energy source for the reaction. It is essential for DNA replication and repair of damaged DNA. This Bacillus velezensis (strain DSM 23117 / BGSC 10A6 / LMG 26770 / FZB42) (Bacillus amyloliquefaciens subsp. plantarum) protein is DNA ligase.